The sequence spans 220 residues: Claudin-22 (220 aa).

At 1 to 10 the chain is on the cytoplasmic side; it reads MALVFRTVAQ. A helical transmembrane segment spans residues 11-30; it reads LAGVSLSLLGWVLSCLTNYL. Over 31-81 the chain is Extracellular; that stretch reads PHWKNLNLDLNEMENWTMGLWQTCVIQEEVGMQCKDFDSFLALPAELRVSR. A helical membrane pass occupies residues 82–102; it reads ILMFLSNGLGFLGLLVSGFGL. At 103 to 117 the chain is on the cytoplasmic side; the sequence is DCLRIGESQRDLKRR. The helical transmembrane segment at 118-138 threads the bilayer; the sequence is LLILGGILSWASGVTALVPVS. Residues 139–164 lie on the Extracellular side of the membrane; sequence WVAHKTVQEFWDENVPDFVPRWEFGE. A helical membrane pass occupies residues 165–185; sequence ALFLGWFAGLSLLLGGCLLHC. The Cytoplasmic portion of the chain corresponds to 186–220; the sequence is AACSSHAPLASGHYAVAQTQDHHQELETRNTNLKH.

This sequence belongs to the claudin family.

The protein localises to the cell junction. It localises to the tight junction. Its subcellular location is the cell membrane. Plays a major role in tight junction-specific obliteration of the intercellular space, through calcium-independent cell-adhesion activity. The polypeptide is Claudin-22 (CLDN22) (Homo sapiens (Human)).